The chain runs to 67 residues: Large ribosomal subunit protein bL35 (67 aa).

This sequence belongs to the bacterial ribosomal protein bL35 family.

The chain is Large ribosomal subunit protein bL35 from Gloeothece citriformis (strain PCC 7424) (Cyanothece sp. (strain PCC 7424)).